A 618-amino-acid polypeptide reads, in one-letter code: DNA mismatch repair protein MutL (618 aa).

Residues 367-381 are compositionally biased toward low complexity; sequence EPTAAREPATPRYSG. Residues 367 to 402 form a disordered region; the sequence is EPTAAREPATPRYSGGASGGNGGRQSAGGWPHAQPG. Positions 382 to 392 are enriched in gly residues; it reads GASGGNGGRQS.

Belongs to the DNA mismatch repair MutL/HexB family.

In terms of biological role, this protein is involved in the repair of mismatches in DNA. It is required for dam-dependent methyl-directed DNA mismatch repair. May act as a 'molecular matchmaker', a protein that promotes the formation of a stable complex between two or more DNA-binding proteins in an ATP-dependent manner without itself being part of a final effector complex. The sequence is that of DNA mismatch repair protein MutL from Salmonella dublin (strain CT_02021853).